Reading from the N-terminus, the 164-residue chain is 2S seed storage protein 1 (164 aa).

Positions 1–21 (MANKLFLVCAALALCFLLTNA) are cleaved as a signal peptide. 3 propeptides span residues 22-37 (SIYR…DATN), 74-83 (EFDFEDDMEN), and 163-164 (FY).

It belongs to the 2S seed storage albumins family. As to quaternary structure, the mature protein consists of a small and a large chain linked by disulfide bonds.

Functionally, this is a 2S seed storage protein. The chain is 2S seed storage protein 1 (AT2S1) from Arabidopsis thaliana (Mouse-ear cress).